Reading from the N-terminus, the 1657-residue chain is Ras GTPase-activating-like protein IQGAP1 (1657 aa).

Residue Ser2 is modified to N-acetylserine. Ser2 carries the post-translational modification Phosphoserine. The region spanning 44–159 is the Calponin-homology (CH) domain; the sequence is LCHLEEAKRW…YCIHALSLYL (116 aa). Tyr172 carries the post-translational modification Phosphotyrosine. Position 330 is a phosphoserine (Ser330). In terms of domain architecture, WW spans 685 to 710; that stretch reads WVKHWVKGGYHYYHNLETQAGGWAEP. 4 IQ domains span residues 745-774, 775-804, 805-834, and 835-864; these read NEGL…FLKK, QIPA…YLHS, HKDE…YFRD, and HIND…AEDP. The tract at residues 956-1274 is C1; the sequence is GGLKALSKEK…FFQVACDVPE (319 aa). The Ras-GAP domain occupies 1020–1269; it reads YLLLRLFQTA…QKFRRFFQVA (250 aa). The tract at residues 1276 to 1657 is C2; the sequence is QDKFNVDEYS…FLLNKKFYGK (382 aa). Position 1441 is a phosphoserine (Ser1441).

In terms of assembly, interacts with CDC42; the interaction is demonstrated with IQGAP1 in GTP-bound and in nucleotide-free state. Interacts with RAC1. Does not interact with RHOA. Interacts with TSG101. Interacts with PAK6. Interacts with SASH1. Interacts with PJVK. Interacts with SLC26A4. This interaction enhances the chloride-bicarbonate exchange activity of SLC26A4. Interacts with SVEP1. Interacts with ILK; the interaction is required for localization of IQGAP to the cell cortex. (Microbial infection) In case of infection, interacts with S.typhimurium protein sseI. In terms of tissue distribution, expressed in the kidney (at protein level).

The protein resides in the cell membrane. It is found in the nucleus. The protein localises to the cytoplasm. It localises to the cell cortex. Its subcellular location is the apical cell membrane. The protein resides in the basolateral cell membrane. In terms of biological role, plays a crucial role in regulating the dynamics and assembly of the actin cytoskeleton. Recruited to the cell cortex by interaction with ILK which allows it to cooperate with its effector DIAPH1 to locally stabilize microtubules and allow stable insertion of caveolae into the plasma membrane. Binds to activated CDC42 but does not stimulate its GTPase activity. Associates with calmodulin. May promote neurite outgrowth. May play a possible role in cell cycle regulation by contributing to cell cycle progression after DNA replication arrest. In Mus musculus (Mouse), this protein is Ras GTPase-activating-like protein IQGAP1 (Iqgap1).